The chain runs to 249 residues: Proteasome subunit alpha type-3 (249 aa).

Belongs to the peptidase T1A family. The 26S proteasome consists of a 20S proteasome core and two 19S regulatory subunits. The 20S proteasome core is composed of 28 subunits that are arranged in four stacked rings, resulting in a barrel-shaped structure. The two end rings are each formed by seven alpha subunits, and the two central rings are each formed by seven beta subunits. The catalytic chamber with the active sites is on the inside of the barrel.

It localises to the cytoplasm. The protein resides in the nucleus. The proteasome is a multicatalytic proteinase complex which is characterized by its ability to cleave peptides with Arg, Phe, Tyr, Leu, and Glu adjacent to the leaving group at neutral or slightly basic pH. The proteasome has an ATP-dependent proteolytic activity. This chain is Proteasome subunit alpha type-3 (PAG1), found in Oryza sativa subsp. japonica (Rice).